The sequence spans 777 residues: Glucocorticoid receptor (777 aa).

Basic and acidic residues predominate over residues 1–14 (MDSKESLTPGKEEN). The tract at residues 1-23 (MDSKESLTPGKEENPSSVLTQER) is disordered. Positions 1–420 (MDSKESLTPG…TATTGPPPKL (420 aa)) are modulating. Residue T8 is modified to Phosphothreonine. Position 23 is an omega-N-methylarginine (R23). Residues S45, S113, S134, and S141 each carry the phosphoserine modification. Positions 130–182 (NRSTSVPENPKSSASSSVSAAPKEKEFPKTHSDVSSEQQNLKGQTGTNGGNVK) are disordered. The span at 134 to 150 (SVPENPKSSASSSVSAA) shows a compositional bias: low complexity. Residues 151-163 (PKEKEFPKTHSDV) show a composition bias toward basic and acidic residues. A compositionally biased stretch (polar residues) spans 164–174 (SSEQQNLKGQT). Residues S203, S211, and S226 each carry the phosphoserine modification. A Glycyl lysine isopeptide (Lys-Gly) (interchain with G-Cter in SUMO2) cross-link involves residue K258. S267 is subject to Phosphoserine. Residues K277 and K293 each participate in a glycyl lysine isopeptide (Lys-Gly) (interchain with G-Cter in SUMO); alternate cross-link. Glycyl lysine isopeptide (Lys-Gly) (interchain with G-Cter in SUMO2); alternate cross-links involve residues K277 and K293. Low complexity predominate over residues 394 to 414 (SSPSMRPDVSSPPSSSSTATT). Residues 394 to 415 (SSPSMRPDVSSPPSSSSTATTG) are disordered. A Phosphoserine modification is found at S404. Residue K419 forms a Glycyl lysine isopeptide (Lys-Gly) (interchain with G-Cter in ubiquitin) linkage. NR C4-type zinc fingers lie at residues 421-441 (CLVC…CGSC) and 457-481 (CAGR…YRKC). A DNA-binding region (nuclear receptor) is located at residues 421–486 (CLVCSDEASG…RYRKCLQAGM (66 aa)). N6-acetyllysine occurs at positions 480, 492, 494, and 495. Residues 485–777 (GMNLEARKTK…NIKKLLFHQK (293 aa)) are interaction with CLOCK. The tract at residues 487–523 (NLEARKTKKKIKGIQQATTGVSQETSENPANKTIVPA) is hinge. The 235-residue stretch at 524-758 (TLPQLTPTLV…FPEMLAEIIT (235 aa)) folds into the NR LBD domain. The interval 532–697 (LVSLLEVIEP…EIRMTYIKEL (166 aa)) is interaction with CRY1. K703 participates in a covalent cross-link: Glycyl lysine isopeptide (Lys-Gly) (interchain with G-Cter in SUMO).

This sequence belongs to the nuclear hormone receptor family. NR3 subfamily. In terms of assembly, heteromultimeric cytoplasmic complex with HSP90AA1, HSPA1A/HSPA1B, and FKBP5 or another immunophilin such as PPID, STIP1, or the immunophilin homolog PPP5C. Upon ligand binding FKBP5 dissociates from the complex and FKBP4 takes its place, thereby linking the complex to dynein and mediating transport to the nucleus, where the complex dissociates. Probably forms a complex composed of chaperones HSP90 and HSP70, co-chaperones CDC37, PPP5C, TSC1 and client protein TSC2, CDK4, AKT, RAF1 and NR3C1; this complex does not contain co-chaperones STIP1/HOP and PTGES3/p23. Directly interacts with UNC45A. Binds to DNA as a homodimer, and as heterodimer with NR3C2 or the retinoid X receptor. Binds STAT5A and STAT5B homodimers and heterodimers. Interacts with NRIP1, POU2F1, POU2F2 and TRIM28. Interacts with several coactivator complexes, including the SMARCA4 complex, CREBBP/EP300, TADA2L (Ada complex) and p160 coactivators such as NCOA2 and NCOA6. Interaction with BAG1 inhibits transactivation. Interacts with HEXIM1 and TGFB1I1. Interacts with NCOA1. Interacts with NCOA3, SMARCA4, SMARCC1, SMARCD1, and SMARCE1. Interacts with CLOCK, CRY1 and CRY2 in a ligand-dependent fashion. Interacts with CIART. Interacts with RWDD3. Interacts with UBE2I/UBC9 and this interaction is enhanced in the presence of RWDD3. Interacts with GRIP1. Interacts with NR4A3 (via nuclear receptor DNA-binding domain), represses transcription activity of NR4A3 on the POMC promoter Nur response element (NurRE). Directly interacts with PNRC2 to attract and form a complex with UPF1 and DCP1A; the interaction leads to rapid mRNA degradation. Interacts with GSK3B. Interacts with FNIP1 and FNIP2. Interacts (via C-terminus) with HNRNPU (via C-terminus). Interacts with MCM3AP. Interacts (via domain NR LBD) with HSP90AA1 and HSP90AB1. In the absence of hormonal ligand, interacts with TACC1. Interacts (via NR LBD domain) with ZNF764 (via KRAB domain); the interaction regulates transcription factor activity of NR3C1 by directing its actions toward certain biologic pathways. Acetylation by CLOCK reduces its binding to glucocorticoid response elements and its transcriptional activity. Post-translationally, increased proteasome-mediated degradation in response to glucocorticoids. In terms of processing, phosphorylated in the absence of hormone; becomes hyperphosphorylated in the presence of glucocorticoid. The Ser-203, Ser-226 and Ser-404-phosphorylated forms are mainly cytoplasmic, and the Ser-211-phosphorylated form is nuclear. Phosphorylation at Ser-211 increases transcriptional activity. Phosphorylation at Ser-203, Ser-226 and Ser-404 decreases signaling capacity. Phosphorylation at Ser-404 may protect from glucocorticoid-induced apoptosis. Phosphorylation at Ser-203 and Ser-211 is not required in regulation of chromosome segregation. May be dephosphorylated by PPP5C, attenuates NR3C1 action. Ubiquitinated by UBR5, leading to its degradation: UBR5 specifically recognizes and binds ligand-bound NR3C1 when it is not associated with coactivators (NCOAs). In presence of NCOAs, the UBR5-degron is not accessible, preventing its ubiquitination and degradation. Post-translationally, sumoylation at Lys-277 and Lys-293 negatively regulates its transcriptional activity. Sumoylation at Lys-703 positively regulates its transcriptional activity in the presence of RWDD3. Sumoylation at Lys-277 and Lys-293 is dispensable whereas sumoylation at Lys-703 is critical for the stimulatory effect of RWDD3 on its transcriptional activity. Heat shock increases sumoylation in a RWWD3-dependent manner.

The protein localises to the cytoplasm. It is found in the nucleus. Its subcellular location is the mitochondrion. It localises to the cytoskeleton. The protein resides in the spindle. The protein localises to the microtubule organizing center. It is found in the centrosome. Its subcellular location is the chromosome. It localises to the nucleoplasm. Functionally, receptor for glucocorticoids (GC). Has a dual mode of action: as a transcription factor that binds to glucocorticoid response elements (GRE), both for nuclear and mitochondrial DNA, and as a modulator of other transcription factors. Affects inflammatory responses, cellular proliferation and differentiation in target tissues. Involved in chromatin remodeling. Plays a role in rapid mRNA degradation by binding to the 5' UTR of target mRNAs and interacting with PNRC2 in a ligand-dependent manner which recruits the RNA helicase UPF1 and the mRNA-decapping enzyme DCP1A, leading to RNA decay. Could act as a coactivator for STAT5-dependent transcription upon growth hormone (GH) stimulation and could reveal an essential role of hepatic GR in the control of body growth. Mediates glucocorticoid-induced apoptosis. Promotes accurate chromosome segregation during mitosis. May act as a tumor suppressor. May play a negative role in adipogenesis through the regulation of lipolytic and antilipogenic gene expression. In Aotus nancymaae (Ma's night monkey), this protein is Glucocorticoid receptor (NR3C1).